We begin with the raw amino-acid sequence, 754 residues long: MARFPTSPAPNRLLRLFSSNKRSSSPTAALLTGDFQLIRHFSAGTAARVAKDEKEPWWKESMDKLRNIGISAHIDSGKTTLTERVLFYTGRIHEIHEVRGRDGVGAKMDSMDLEREKGITIQSAATYCTWKDYKVNIIDTPGHVDFTIEVERALRVLDGAILVLCSVGGVQSQSITVDRQMRRYEVPRVAFINKLDRMGADPWKVLNQARAKLRHHSAAVQVPIGLEENFQGLIDLIHVKAYFFHGSSGENVVAGDIPADMEGLVAEKRRELIETVSEVDDVLAEKFLNDEPVSASELEEAIRRATIAQTFVPVFMGSAFKNKGVQPLLDGVVSFLPSPNEVNNYALDQNNNEERVTLTGSPDGPLVALAFKLEEGRFGQLTYLRVYEGVIKKGDFIINVNTGKRIKVPRLVRMHSNDMEDIQEAHAGQIVAVFGIECASGDTFTDGSVKYTMTSMNVPEPVMSLAVQPVSKDSGGQFSKALNRFQKEDPTFRVGLDPESGQTIISGMGELHLDIYVERMRREYKVDATVGKPRVNFRETITQRAEFDYLHKKQSGGAGQYGRVTGYVEPLPPGSKEKFEFENMIVGQAIPSGFIPAIEKGFKEAANSGSLIGHPVENLRIVLTDGASHAVDSSELAFKMAAIYAFRLCYTAARPVILEPVMLVELKVPTEFQGTVAGDINKRKGIIVGNDQEGDDSVITANVPLNNMFGYSTSLRSMTQGKGEFTMEYKEHSAVSNEVQAQLVNAYSASKATE.

A mitochondrion-targeting transit peptide spans 1 to 17; sequence MARFPTSPAPNRLLRLF. One can recognise a tr-type G domain in the interval 63–340; that stretch reads DKLRNIGISA…GVVSFLPSPN (278 aa). GTP-binding positions include 72–79, 139–143, and 193–196; these read AHIDSGKT, DTPGH, and NKLD.

It belongs to the TRAFAC class translation factor GTPase superfamily. Classic translation factor GTPase family. EF-G/EF-2 subfamily. In terms of tissue distribution, expressed in cotyledons and adult leaves at the same levels.

It is found in the mitochondrion. The protein operates within protein biosynthesis; polypeptide chain elongation. Mitochondrial GTPase that catalyzes the GTP-dependent ribosomal translocation step during translation elongation. During this step, the ribosome changes from the pre-translocational (PRE) to the post-translocational (POST) state as the newly formed A-site-bound peptidyl-tRNA and P-site-bound deacylated tRNA move to the P and E sites, respectively. Catalyzes the coordinated movement of the two tRNA molecules, the mRNA and conformational changes in the ribosome. This chain is Elongation factor G-1, mitochondrial (MEFG1), found in Arabidopsis thaliana (Mouse-ear cress).